Consider the following 337-residue polypeptide: Adenylosuccinate synthetase (337 aa).

Residues 12 to 18 (GDEGKGK) and 42 to 44 (GHT) each bind GTP. Residue D13 is the Proton acceptor of the active site. Positions 13 and 42 each coordinate Mg(2+). IMP is bound by residues 13-16 (DEGK), 40-43 (NAGH), T127, R141, Q179, T194, and R256. H43 (proton donor) is an active-site residue. 252-258 (TVTGRRR) contacts substrate. GTP is bound by residues R258, 284–286 (CLD), and 324–326 (STG).

The protein belongs to the adenylosuccinate synthetase family. In terms of assembly, homodimer. Mg(2+) serves as cofactor.

Its subcellular location is the cytoplasm. The catalysed reaction is IMP + L-aspartate + GTP = N(6)-(1,2-dicarboxyethyl)-AMP + GDP + phosphate + 2 H(+). It functions in the pathway purine metabolism; AMP biosynthesis via de novo pathway; AMP from IMP: step 1/2. Its function is as follows. Plays an important role in the de novo pathway of purine nucleotide biosynthesis. Catalyzes the first committed step in the biosynthesis of AMP from IMP. The chain is Adenylosuccinate synthetase from Methanococcus maripaludis (strain C6 / ATCC BAA-1332).